Here is a 1129-residue protein sequence, read N- to C-terminus: Large proline-rich protein bag6 (1129 aa).

In terms of domain architecture, Ubiquitin-like spans 1–76 (MEVTVKTLDS…HLVERAPPQT (76 aa)). Disordered stretches follow at residues 69–108 (VERA…PERN), 187–235 (QPVN…SPSE), 347–402 (TGNG…HPHP), 490–518 (PAAP…VPGA), 550–606 (GSNT…QHLS), 654–692 (VPVS…ESLP), 942–967 (VPQA…NGAA), and 987–1009 (VPTI…QWAA). Residues 73–105 (PPQTQPSTGGPSTSSSTSPSSSNAANVPGAGAP) show a composition bias toward low complexity. 2 stretches are compositionally biased toward polar residues: residues 209-232 (RETL…SHPS) and 364-383 (HTPT…QPPS). Low complexity-rich tracts occupy residues 553-593 (TPSS…SSGP) and 655-666 (PVSTSPPQSASQ). Over residues 667–686 (APPPSSPSPPPAHSSPPPAA) the composition is skewed to pro residues. Residues 947–956 (EASSQDQPME) show a composition bias toward polar residues.

As to quaternary structure, component of the bag6/bat3 complex.

The protein localises to the cytoplasm. The protein resides in the cytosol. It is found in the nucleus. It localises to the secreted. Its subcellular location is the extracellular exosome. In terms of biological role, ATP-independent molecular chaperone preventing the aggregation of misfolded and hydrophobic patches-containing proteins. Functions as part of a cytosolic protein quality control complex, the bag6/bat3 complex, which maintains these client proteins in a soluble state and participates in their proper delivery to the endoplasmic reticulum or alternatively can promote their sorting to the proteasome where they undergo degradation. The bag6/bat3 complex is involved in the post-translational delivery of tail-anchored/type II transmembrane proteins to the endoplasmic reticulum membrane. Similarly, the bag6/bat3 complex also functions as a sorting platform for proteins of the secretory pathway that are mislocalized to the cytosol either delivering them to the proteasome for degradation or to the endoplasmic reticulum. The bag6/bat3 complex also plays a role in the endoplasmic reticulum-associated degradation (ERAD), a quality control mechanism that eliminates unwanted proteins of the endoplasmic reticulum through their retrotranslocation to the cytosol and their targeting to the proteasome. It maintains these retrotranslocated proteins in an unfolded yet soluble state condition in the cytosol to ensure their proper delivery to the proteasome. Also required for selective ubiquitin-mediated degradation of defective nascent chain polypeptides by the proteasome. Also involved in endoplasmic reticulum stress-induced pre-emptive quality control, a mechanism that selectively attenuates the translocation of newly synthesized proteins into the endoplasmic reticulum and reroutes them to the cytosol for proteasomal degradation. May ensure the proper degradation of these proteins and thereby protects the endoplasmic reticulum from protein overload upon stress. By stabilizing a large spectrum of proteins, may indirectly affect different biological processes including apoptosis. By controlling the steady-state expression of the IGF1R receptor, indirectly regulates the insulin-like growth factor receptor signaling pathway. When nuclear, may also act as a component of some chromatin regulator complex. This chain is Large proline-rich protein bag6, found in Xenopus tropicalis (Western clawed frog).